The primary structure comprises 212 residues: Thymidylate kinase (212 aa).

10 to 17 (GLEGAGKT) lines the ATP pocket.

It belongs to the thymidylate kinase family.

The enzyme catalyses dTMP + ATP = dTDP + ADP. Its function is as follows. Phosphorylation of dTMP to form dTDP in both de novo and salvage pathways of dTTP synthesis. The chain is Thymidylate kinase from Serratia proteamaculans (strain 568).